We begin with the raw amino-acid sequence, 204 residues long: MPNKLPSLIIIMLTTFSIILISFIIRQLYLHIAQSYKNHDVNDITIVDRLGSILPYWLPLLEGLQNFGQQILPDYPFNVMQIYKKTLMPLVIFYVTHPTLAVIIFFILYYLFVRNKSPIPDRPFIRFNVLQSILLFLINSLLGATFRALPIEFRMSLYGLMMCNTLFWFVLSTISYSIIKSIEGKYAKIPVISQAVRIQIDNQL.

4 helical membrane passes run Leu5–Ile25, Leu87–Ile107, Ile133–Phe153, and Gly159–Ile179.

It belongs to the Tic20 family.

The protein resides in the plastid. It is found in the chloroplast membrane. This chain is Tic20 family protein Ycf60 (ycf60), found in Gracilaria tenuistipitata var. liui (Red alga).